Consider the following 340-residue polypeptide: Solute carrier family 35 member G3 (340 aa).

Positions 11–33 (PDFTQPSPPSTPASLPSKHHHRC) are disordered. The next 9 membrane-spanning stretches (helical) occupy residues 39-59 (TKGL…VGPF), 69-89 (LPSL…ALLL), 107-127 (FLHA…VQVV), 160-180 (AWCG…PGLG), 189-209 (LYTA…SLGL), 223-243 (TVAF…LFVL), 257-277 (CVVA…YAVT), 283-303 (LVCA…YYVL), and 307-327 (VAPS…IITA). The EamA 1 domain occupies 51–176 (LSAGFVGPFS…STLGLIIIVG (126 aa)). The 54-residue stretch at 274–327 (YAVTKAHPALVCAVLHSEVVVALMLQYYVLYETVAPSDIMGAGVVLGSIAIITA) folds into the EamA 2 domain.

Belongs to the SLC35G solute transporter family.

The protein localises to the membrane. In Mus musculus (Mouse), this protein is Solute carrier family 35 member G3 (Slc35g3).